The chain runs to 326 residues: MFNIQSDDLLHHFEADSNDTLLSAALRAELVFPYECNSGGCGACKIELLEGEVSNLWPDAPGLAARELRKNRFLACQCKPLSDLKIKVINRAEGRASHPPKRFSTRVVSKRFLSDEMFELRLEAEQKVVFSPGQYFMVDVPELGTRAYSAANPVDGNTLTLIVKAVPNGKVSCALANETIETLQLDGPYGLSVLKTADETQSVFIAGGSGIAPMVSMVNTLIAQGYEKPITVFYGSRLEAELEAAETLFGWKENLKLINVSSSVVGNSEKKYPTGYVHEIIPEYMEGLLGAEFYLCGPPQMINSVQKLLMIENKVPFEAIHFDRFF.

A 2Fe-2S ferredoxin-type domain is found at 1–92 (MFNIQSDDLL…DLKIKVINRA (92 aa)). Cys-36, Cys-41, Cys-44, and Cys-76 together coordinate [2Fe-2S] cluster. The tract at residues 95–326 (RASHPPKRFS…FEAIHFDRFF (232 aa)) is ferredoxin-reductase. Positions 100 to 195 (PKRFSTRVVS…DGPYGLSVLK (96 aa)) constitute an FAD-binding FR-type domain. FAD is bound by residues 146–149 (RAYS), 162–164 (IVK), and 170–172 (KVS).

This sequence belongs to the bacterial ring-hydroxylating dioxygenase ferredoxin reductase family. Monomer. The alkene monooxygenase multicomponent enzyme system is composed of an electron transfer component and a monooxygenase component interacting with the effector protein TmoD. The electron transfer component is composed of a ferredoxin reductase (TmoF) and a ferredoxin (TmoC), and the monooxygenase component is formed by a heterohexamer (dimer of heterotrimers) of two alpha subunits (TmoA), two beta subunits (TmoE) and two gamma subunits (TmoB). Requires FAD as cofactor. [2Fe-2S] cluster is required as a cofactor.

The enzyme catalyses 2 reduced [2Fe-2S]-[ferredoxin] + NAD(+) + H(+) = 2 oxidized [2Fe-2S]-[ferredoxin] + NADH. Its pathway is xenobiotic degradation; toluene degradation. Reductase component of the toluene-4-monooxygenase multicomponent enzyme system which catalyzes the O2- and NADH-dependent hydroxylation of toluene to form p-cresol. Ferredoxin reductase catalyzes the transfer of electrons from NADH to ferredoxin (TmoC). The chain is Toluene-4-monooxygenase system, ferredoxin--NAD(+) reductase component from Ectopseudomonas mendocina (Pseudomonas mendocina).